The following is a 453-amino-acid chain: tRNA-2-methylthio-N(6)-dimethylallyladenosine synthase (453 aa).

Residues 11 to 131 (KSFHVKSFGC…LPQLVADAAE (121 aa)) form the MTTase N-terminal domain. Positions 20, 56, 94, 167, 171, and 174 each coordinate [4Fe-4S] cluster. A Radical SAM core domain is found at 153 to 385 (RRQGPTAFLT…QALLNEQQHR (233 aa)). The region spanning 388–449 (LATVGKRCEV…PNSLSGALVE (62 aa)) is the TRAM domain.

Belongs to the methylthiotransferase family. MiaB subfamily. As to quaternary structure, monomer. [4Fe-4S] cluster is required as a cofactor.

It localises to the cytoplasm. The enzyme catalyses N(6)-dimethylallyladenosine(37) in tRNA + (sulfur carrier)-SH + AH2 + 2 S-adenosyl-L-methionine = 2-methylsulfanyl-N(6)-dimethylallyladenosine(37) in tRNA + (sulfur carrier)-H + 5'-deoxyadenosine + L-methionine + A + S-adenosyl-L-homocysteine + 2 H(+). Functionally, catalyzes the methylthiolation of N6-(dimethylallyl)adenosine (i(6)A), leading to the formation of 2-methylthio-N6-(dimethylallyl)adenosine (ms(2)i(6)A) at position 37 in tRNAs that read codons beginning with uridine. The sequence is that of tRNA-2-methylthio-N(6)-dimethylallyladenosine synthase from Rhizorhabdus wittichii (strain DSM 6014 / CCUG 31198 / JCM 15750 / NBRC 105917 / EY 4224 / RW1) (Sphingomonas wittichii).